A 217-amino-acid polypeptide reads, in one-letter code: MOB kinase activator 3A (217 aa).

Positions 83, 88, 165, and 170 each coordinate Zn(2+).

It belongs to the MOB1/phocein family.

Its function is as follows. May regulate the activity of kinases. The chain is MOB kinase activator 3A (MOB3A) from Pongo abelii (Sumatran orangutan).